Here is an 88-residue protein sequence, read N- to C-terminus: Putative regulatory protein DvMF_1139 (88 aa).

It belongs to the RemA family.

This is Putative regulatory protein DvMF_1139 from Nitratidesulfovibrio vulgaris (strain DSM 19637 / Miyazaki F) (Desulfovibrio vulgaris).